The sequence spans 153 residues: SsrA-binding protein (153 aa).

Belongs to the SmpB family.

The protein localises to the cytoplasm. Its function is as follows. Required for rescue of stalled ribosomes mediated by trans-translation. Binds to transfer-messenger RNA (tmRNA), required for stable association of tmRNA with ribosomes. tmRNA and SmpB together mimic tRNA shape, replacing the anticodon stem-loop with SmpB. tmRNA is encoded by the ssrA gene; the 2 termini fold to resemble tRNA(Ala) and it encodes a 'tag peptide', a short internal open reading frame. During trans-translation Ala-aminoacylated tmRNA acts like a tRNA, entering the A-site of stalled ribosomes, displacing the stalled mRNA. The ribosome then switches to translate the ORF on the tmRNA; the nascent peptide is terminated with the 'tag peptide' encoded by the tmRNA and targeted for degradation. The ribosome is freed to recommence translation, which seems to be the essential function of trans-translation. This chain is SsrA-binding protein, found in Desulforudis audaxviator (strain MP104C).